A 309-amino-acid polypeptide reads, in one-letter code: Aspartate carbamoyltransferase catalytic subunit (309 aa).

Residues arginine 55 and threonine 56 each contribute to the carbamoyl phosphate site. Lysine 85 lines the L-aspartate pocket. Carbamoyl phosphate is bound by residues arginine 106, histidine 135, and glutamine 138. Residues arginine 168 and arginine 230 each contribute to the L-aspartate site. The carbamoyl phosphate site is built by leucine 268 and proline 269.

This sequence belongs to the aspartate/ornithine carbamoyltransferase superfamily. ATCase family. In terms of assembly, heterododecamer (2C3:3R2) of six catalytic PyrB chains organized as two trimers (C3), and six regulatory PyrI chains organized as three dimers (R2).

It catalyses the reaction carbamoyl phosphate + L-aspartate = N-carbamoyl-L-aspartate + phosphate + H(+). It functions in the pathway pyrimidine metabolism; UMP biosynthesis via de novo pathway; (S)-dihydroorotate from bicarbonate: step 2/3. Its function is as follows. Catalyzes the condensation of carbamoyl phosphate and aspartate to form carbamoyl aspartate and inorganic phosphate, the committed step in the de novo pyrimidine nucleotide biosynthesis pathway. This chain is Aspartate carbamoyltransferase catalytic subunit, found in Aliivibrio fischeri (strain MJ11) (Vibrio fischeri).